Here is a 263-residue protein sequence, read N- to C-terminus: 3'-5' ssDNA/RNA exonuclease TatD (263 aa).

Residues E91, H127, and H152 each contribute to the a divalent metal cation site.

This sequence belongs to the metallo-dependent hydrolases superfamily. TatD-type hydrolase family. TatD subfamily. As to quaternary structure, monomer. The cofactor is Mg(2+).

It is found in the cytoplasm. Functionally, 3'-5' exonuclease that prefers single-stranded DNA and RNA. May play a role in the H(2)O(2)-induced DNA damage repair. The polypeptide is 3'-5' ssDNA/RNA exonuclease TatD (Cronobacter sakazakii (strain ATCC BAA-894) (Enterobacter sakazakii)).